We begin with the raw amino-acid sequence, 477 residues long: Prolyl tri/tetrapeptidyl aminopeptidase (477 aa).

The N-terminal stretch at 1–27 (MRKALRSLLAASMLIGAIGAGSATAEA) is a signal peptide. The propeptide occupies 28-33 (ASITAP). Positions 448 to 477 (QKDEKAAKPLAPFDAKLDRVKNDKQSALRP) are disordered. Over residues 462–477 (AKLDRVKNDKQSALRP) the composition is skewed to basic and acidic residues.

This sequence belongs to the peptidase S37 family.

The protein localises to the secreted. The protein resides in the cell surface. Completely inhibited by the serine protease inhibitor phenylmethylsulfonyl fluoride. Partially inhibited by the serine protease inhibitor Pefabloc. Not inhibited by cysteine proteinase-specific or metalloproteinase-specific inhibitors. Not inhibited by prolinal or its derivatives. EDTA and EGTA both partially inhibit this enzyme. EDTA has no effect on activity. Its function is as follows. Has proline-specific tripeptidyl aminopeptidase and tetrapeptidyl aminopeptidase activity. Activity is highest against tripeptides containing an Ala-Pro motif. Involved in the final processing of transglutaminase, by removing either the tetrapeptide Phe-Arg-Ala-Pro left after TAMEP or SAM-P45 hydrolysis, or the tripeptide Arg-Ala-Pro left after SGMP II hydrolysis in a single step. In Streptomyces mobaraensis (Streptoverticillium mobaraense), this protein is Prolyl tri/tetrapeptidyl aminopeptidase (ptp).